The primary structure comprises 344 residues: L-threonine 3-dehydrogenase (344 aa).

Cys-42 is a binding site for Zn(2+). Residues Thr-44 and His-47 each act as charge relay system in the active site. The Zn(2+) site is built by His-67, Glu-68, Cys-97, Cys-100, Cys-103, and Cys-111. Residues Ile-179, Asp-199, Arg-204, 266 to 268 (LGI), and 290 to 291 (IY) each bind NAD(+).

This sequence belongs to the zinc-containing alcohol dehydrogenase family. Homotetramer. Zn(2+) serves as cofactor.

Its subcellular location is the cytoplasm. The catalysed reaction is L-threonine + NAD(+) = (2S)-2-amino-3-oxobutanoate + NADH + H(+). Its pathway is amino-acid degradation; L-threonine degradation via oxydo-reductase pathway; glycine from L-threonine: step 1/2. In terms of biological role, catalyzes the NAD(+)-dependent oxidation of L-threonine to 2-amino-3-ketobutyrate. This chain is L-threonine 3-dehydrogenase, found in Chelativorans sp. (strain BNC1).